Reading from the N-terminus, the 2196-residue chain is Non-reducing polyketide synthase CTB1 (2196 aa).

Residues 11-250 (AFGDQTYDCS…TRLPITAPYH (240 aa)) are N-terminal acylcarrier protein transacylase domain (SAT). In terms of domain architecture, Ketosynthase family 3 (KS3) spans 381 to 814 (KSPIAILAAS…GGNTCLVLED (434 aa)). Residues cysteine 553, histidine 688, and histidine 733 each act as for beta-ketoacyl synthase activity in the active site. A malonyl-CoA:ACP transacylase (MAT) domain region spans residues 922 to 1223 (AFTGQGSAFA…QTFASINKDK (302 aa)). The segment at 1298-1611 (SSSIHKVITN…VPKRLMHYIV (314 aa)) is product template (PT) domain. The tract at residues 1302 to 1441 (HKVITNTITA…EKTALKSAAL (140 aa)) is N-terminal hotdog fold. Positions 1302–1608 (HKVITNTITA…LQGVPKRLMH (307 aa)) constitute a PKS/mFAS DH domain. The Proton acceptor; for dehydratase activity role is filled by histidine 1335. The tract at residues 1460-1608 (TYRFSKGMIY…LQGVPKRLMH (149 aa)) is C-terminal hotdog fold. The active-site Proton donor; for dehydratase activity is the aspartate 1520. The disordered stretch occupies residues 1617-1666 (KASGPPTEKKTSSPPVEKKASAPVAPTRPAIQRKNASIPPPATQVTPQNK). Positions 1623–1636 (TEKKTSSPPVEKKA) are enriched in basic and acidic residues. Carrier domains lie at 1671–1748 (PSVS…TRLS) and 1775–1857 (DPSP…SGST). O-(pantetheine 4'-phosphoryl)serine occurs at positions 1708 and 1816. Positions 1856 to 1867 (STESFDSTTTKP) are enriched in polar residues. The interval 1856–1923 (STESFDSTTT…PPKGRIPPAW (68 aa)) is disordered. Low complexity predominate over residues 1872–1887 (ATPPLTDSSASSPPSS). Residues 1937-2187 (ILFLFPDGAG…SGAQMLVEHM (251 aa)) form a thioesterase (TE) domain region.

Pantetheine 4'-phosphate serves as cofactor.

The enzyme catalyses 6 malonyl-CoA + acetyl-CoA + 6 H(+) = nor-toralactone + 6 CO2 + 7 CoA + 2 H2O. It functions in the pathway mycotoxin biosynthesis. Functionally, polyketide synthase; part of the gene cluster that mediates the biosynthesis of cercosporin, a light-activated, non-host-selective toxin. The perylenequinone chromophore of cercosporin absorbs light energy to attain an electronically-activated triplet state and produces active oxygen species such as the hydroxyl radical, superoxide, hydrogen peroxide or singlet oxygen upon reaction with oxygen molecules. These reactive oxygen species cause damage to various cellular components including lipids, proteins and nucleic acids. The first step of cercosporin biosynthesis is performed by the polyketide synthase CTB1 which catalyzes the formation of nor-toralactone. The starter unit acyltransferase (SAT) domain of CTB1 initiates polyketide extension by the selective utilization of acetyl-CoA, which is elongated to the heptaketide in the beta-ketoacyl synthase (KS) domain by successive condensations with six malonyl units introduced by the malonyl acyltransferase (MAT) domain. The product template (PT) domain catalyzes C4-C9 and C2-C11 aldol cyclizations and dehydrations to a trihydroxynaphthalene, which is thought to be delivered to the thioesterase (TE) domain for product release. The bifunctional enzyme CTB3 then methylates nor-toralactone to toralactone before conducting an unusual oxidative aromatic ring opening. The O-methyltransferase CTB2 further methylates the nascent OH-6 of the CBT3 product, blocking further oxidation at this site before the reductase CTB6 reduces the 2-oxopropyl ketone at position C7, giving naphthalene. The FAD-dependent monooxygenase CTB5 in concert with the multicopper oxidase CTB12 are responsible for homodimerization of naphthalene with CTB7 installing the dioxepine moiety, finally producing cercosporin. The fasciclin domain-containing protein CTB11 might act with CTB5 and CTB12 whereas the roles of CTB9 and CTB10 have still to be elucidated. In Cercospora nicotianae (Barn spot disease fungus), this protein is Non-reducing polyketide synthase CTB1.